Consider the following 1119-residue polypeptide: MTAAAASNWGLITNIVNSIVGVSVLTMPFCFKQCGIVLGALLLVFCSWMTHQSCMFLVKSASLSKRRTYAGLAFHAYGKAGKMLVETSMIGLMLGTCIAFYVVIGDLGSNFFARLFGFQVGGTFRMFLLFAVSLCIVLPLSLQRNMMASIQSFSAMALLFYTVFMFVIVLSSLKHGLFSGQWLRRVSYVRWEGVFRCIPIFGMSFACQSQVLPTYDSLDEPSVKTMSSIFASSLNVVTTFYVMVGFFGYVSFTEATAGNVLMHFPSNLVTEMLRVGFMMSVAVGFPMMILPCRQALSTLLCEQQQKDGTFAAGGYMPPLRFKALTLSVVFGTMVGGILIPNVETILGLTGATMGSLICFICPALIYKKIHKNALSSQVVLWVGLGVLVVSTVTTLSVSEEVPEDLAEEAPGGRLGEAEGLMKVEAARLSAQDPVVAVAEDGREKPKLPKEREELEQAQIKGPVDVPGREDGKEAPEEAQLDRPGQGIAVPVGEAHRHEPPVPHDKVVVDEGQDREVPEENKPPSRHAGGKAPGVQGQMAPPLPDSEREKQEPEQGEVGKRPGQAQALEEAGDLPEDPQKVPEADGQPAVQPAKEDLGPGDRGLHPRPQAVLSEQQNGLAVGGGEKAKGGPPPGNAAGDTGQPAEDSDHGGKPPLPAEKPAPGPGLPPEPREQRDVERAGGNQAASQLEEAGRAEMLDHAVLLQVIKEQQVQQKRLLDQQEKLLAVIEEQHKEIHQQRQEDEEDKPRQVEVHQEPGAAVPRGQEAPEGKARETVENLPPLPLDPVLRAPGGRPAPSQDLNQRSLEHSEGPVGRDPAGPPDGGPDTEPRAAQAKLRDGQKDAAPRAAGTVKELPKGPEQVPVPDPAREAGGPEERLAEEFPGQSQDVTGGSQDRKKPGKEVAATGTSILKEANWLVAGPGAETGDPRMKPKQVSRDLGLAADLPGGAEGAAAQPQAVLRQPELRVISDGEQGGQQGHRLDHGGHLEMRKARGGDHVPVSHEQPRGGEDAAVQEPRQRPEPELGLKRAVPGGQRPDNAKPNRDLKLQAGSDLRRRRRDLGPHAEGQLAPRDGVIIGLNPLPDVQVNDLRGALDAQLRQAAGGALQVVHSRQLRQAPGPPEES.

10 consecutive transmembrane segments (helical) span residues 4-24 (AAAS…GVSV), 36-58 (IVLG…MFLV), 84-104 (LVET…YVVI), 120-140 (VGGT…VLPL), 153-173 (FSAM…LSSL), 229-249 (IFAS…FFGY), 272-292 (MLRV…ILPC), 323-343 (ALTL…PNVE), 345-365 (ILGL…PALI), and 378-398 (VVLW…LSVS). Disordered stretches follow at residues 438-691 (AEDG…EEAG) and 731-1071 (KEIH…DGVI). Basic and acidic residues-rich tracts occupy residues 439–454 (EDGR…REEL), 466–475 (PGREDGKEAP), 493–522 (EAHR…ENKP), 544–559 (DSER…EVGK), and 592–603 (AKEDLGPGDRGL). The residue at position 612 (Ser612) is a Phosphoserine. Over residues 652–667 (PPLPAEKPAPGPGLPP) the composition is skewed to pro residues. Basic and acidic residues-rich tracts occupy residues 668–677 (EPREQRDVER), 731–752 (KEIH…EVHQ), and 763–773 (EAPEGKARETV). Position 772 is a phosphothreonine (Thr772). Ser802 is subject to Phosphoserine. Basic and acidic residues-rich tracts occupy residues 832-841 (KLRDGQKDAA) and 863-876 (PARE…RLAE). Polar residues predominate over residues 880–889 (GQSQDVTGGS). 3 positions are modified to phosphoserine: Ser889, Ser965, and Ser997. Composition is skewed to basic and acidic residues over residues 975–1005 (HRLD…RGGE), 1012–1022 (PRQRPEPELGL), and 1033–1042 (DNAKPNRDLK).

Belongs to the amino acid/polyamine transporter 2 family.

It localises to the membrane. The enzyme catalyses L-glutamate(out) = L-glutamate(in). It catalyses the reaction L-glutamine(out) = L-glutamine(in). The catalysed reaction is L-alanine(in) = L-alanine(out). It carries out the reaction L-serine(in) = L-serine(out). The enzyme catalyses L-leucine(in) = L-leucine(out). Functionally, facilitates bidirectional transport of amino acids. May act as a glutamate sensor that regulates glutamate-glutamine cycle and mTOR signaling in the brain. The transport mechanism remains to be elucidated. This chain is Solute carrier family 38 member 10, found in Homo sapiens (Human).